Consider the following 206-residue polypeptide: Adenylate kinase (206 aa).

Residues 1-21 (MSQPKILLLGAPGAGKGTQSS) form a disordered region. ATP is bound at residue 13–18 (GAGKGT). Positions 33-61 (TTGDALRANKDMETEHGTPREFMEAGELV) are NMP. AMP is bound by residues threonine 34, arginine 39, 59-61 (ELV), 84-87 (GYPR), and glutamine 91. Residues 120-153 (GRRMDPETGDIYHTEFNMPDDEEVRERLVQRDDD) form an LID region. ATP-binding positions include arginine 121 and 130–131 (IY). AMP is bound by residues arginine 150 and arginine 161. Residue alanine 189 coordinates ATP.

The protein belongs to the adenylate kinase family. Monomer.

Its subcellular location is the cytoplasm. It carries out the reaction AMP + ATP = 2 ADP. It participates in purine metabolism; AMP biosynthesis via salvage pathway; AMP from ADP: step 1/1. Functionally, catalyzes the reversible transfer of the terminal phosphate group between ATP and AMP. Plays an important role in cellular energy homeostasis and in adenine nucleotide metabolism. In Natronomonas pharaonis (strain ATCC 35678 / DSM 2160 / CIP 103997 / JCM 8858 / NBRC 14720 / NCIMB 2260 / Gabara) (Halobacterium pharaonis), this protein is Adenylate kinase.